A 143-amino-acid chain; its full sequence is NADH-quinone oxidoreductase subunit A (143 aa).

3 consecutive transmembrane segments (helical) span residues 8–28, 63–83, and 93–113; these read FGNV…GYLT, FYVV…LFPW, and FALI…VYAW.

Belongs to the complex I subunit 3 family. In terms of assembly, NDH-1 is composed of 14 different subunits. Subunits NuoA, H, J, K, L, M, N constitute the membrane sector of the complex.

It is found in the cell inner membrane. It catalyses the reaction a quinone + NADH + 5 H(+)(in) = a quinol + NAD(+) + 4 H(+)(out). NDH-1 shuttles electrons from NADH, via FMN and iron-sulfur (Fe-S) centers, to quinones in the respiratory chain. The immediate electron acceptor for the enzyme in this species is believed to be a menaquinone. Couples the redox reaction to proton translocation (for every two electrons transferred, four hydrogen ions are translocated across the cytoplasmic membrane), and thus conserves the redox energy in a proton gradient. The protein is NADH-quinone oxidoreductase subunit A of Chlorobium luteolum (strain DSM 273 / BCRC 81028 / 2530) (Pelodictyon luteolum).